The following is a 213-amino-acid chain: Charged multivesicular body protein 2b (213 aa).

An N-acetylalanine modification is found at Ala2. The stretch at 25–55 forms a coiled coil; it reads QRAIIRDRAALEKQEKQLELEIKKMAKIGNK. The segment covering 179-194 has biased composition (low complexity); sequence AKAPSAARSLPSASTS. The disordered stretch occupies residues 179-199; it reads AKAPSAARSLPSASTSKATIS. The residue at position 199 (Ser199) is a Phosphoserine. The MIT-interacting motif motif lies at 201 to 211; that stretch reads EEIERQLKALG.

The protein belongs to the SNF7 family. As to quaternary structure, probable core component of the endosomal sorting required for transport complex III (ESCRT-III). ESCRT-III components are thought to multimerize to form a flat lattice on the perimeter membrane of the endosome. Several assembly forms of ESCRT-III may exist that interact and act sequentially. Interacts with CHMP2A. Interacts with VPS4A. Interacts with VPS4B; the interaction is direct. In brain, it is expressed in all neuronal populations with a relatively enhanced expression in the hippocampus, frontal and temporal lobes and in both granule and Purkinje cells of the cerebellum. Not expressed in astrocytes or oligodendrocytes.

The protein localises to the cytoplasm. The protein resides in the cytosol. It localises to the late endosome membrane. Its function is as follows. Probable core component of the endosomal sorting required for transport complex III (ESCRT-III) which is involved in multivesicular bodies (MVBs) formation and sorting of endosomal cargo proteins into MVBs. MVBs contain intraluminal vesicles (ILVs) that are generated by invagination and scission from the limiting membrane of the endosome and mostly are delivered to lysosomes enabling degradation of membrane proteins, such as stimulated growth factor receptors, lysosomal enzymes and lipids. The MVB pathway appears to require the sequential function of ESCRT-O, -I,-II and -III complexes. ESCRT-III proteins mostly dissociate from the invaginating membrane before the ILV is released. The ESCRT machinery also functions in topologically equivalent membrane fission events, such as the terminal stages of cytokinesis. ESCRT-III proteins are believed to mediate the necessary vesicle extrusion and/or membrane fission activities, possibly in conjunction with the AAA ATPase VPS4. The polypeptide is Charged multivesicular body protein 2b (Chmp2b) (Mus musculus (Mouse)).